A 262-amino-acid polypeptide reads, in one-letter code: tRNA pseudouridine synthase A (262 aa).

The Nucleophile role is filled by Asp51. Tyr109 contacts substrate.

The protein belongs to the tRNA pseudouridine synthase TruA family. In terms of assembly, homodimer.

The enzyme catalyses uridine(38/39/40) in tRNA = pseudouridine(38/39/40) in tRNA. In terms of biological role, formation of pseudouridine at positions 38, 39 and 40 in the anticodon stem and loop of transfer RNAs. This chain is tRNA pseudouridine synthase A, found in Legionella pneumophila (strain Lens).